Reading from the N-terminus, the 122-residue chain is UPF0102 protein XOO3839 (122 aa).

It belongs to the UPF0102 family.

This is UPF0102 protein XOO3839 from Xanthomonas oryzae pv. oryzae (strain KACC10331 / KXO85).